Reading from the N-terminus, the 417-residue chain is RH-like protein IIF (417 aa).

A run of 11 helical transmembrane segments spans residues 12–32 (CLPL…YFFT), 44–64 (LVAS…GFGF), 77–97 (VAFN…LDGF), 125–145 (ISAG…MVLV), 172–192 (FYLF…KPLP), 203–223 (TIPS…WPSF), 238–258 (VFNT…GSSL), 265–285 (ISMT…GTSC), 287–307 (LIPS…ISIG), 331–351 (NFSL…VRHT), and 358–378 (MIGF…AIAL).

Belongs to the ammonium transporter (TC 2.A.49) family. Rh subfamily.

The protein resides in the membrane. May be part of an oligomeric complex which is likely to have a transport or channel function in the erythrocyte membrane. The protein is RH-like protein IIF of Pan troglodytes (Chimpanzee).